A 147-amino-acid chain; its full sequence is Hemoglobin subunit beta-H0 (147 aa).

One can recognise a Globin domain in the interval 3–147 (HFTAEEKAAI…VATALSHKYH (145 aa)). Heme b-binding residues include His64 and His93.

Belongs to the globin family. In terms of assembly, heterotetramer of two alpha chains and two beta chains. Red blood cells.

In terms of biological role, this is a minor early embryonic beta chain. The polypeptide is Hemoglobin subunit beta-H0 (Hbb-bh0) (Mus musculus (Mouse)).